The primary structure comprises 346 residues: Inositol 2-dehydrogenase/D-chiro-inositol 3-dehydrogenase (346 aa).

Belongs to the Gfo/Idh/MocA family. Homotetramer.

The enzyme catalyses myo-inositol + NAD(+) = scyllo-inosose + NADH + H(+). The catalysed reaction is 1D-chiro-inositol + NAD(+) = scyllo-inosine + NADH + H(+). It participates in polyol metabolism; myo-inositol degradation into acetyl-CoA; acetyl-CoA from myo-inositol: step 1/7. Its function is as follows. Involved in the oxidation of myo-inositol (MI) and D-chiro-inositol (DCI) to 2-keto-myo-inositol (2KMI or 2-inosose) and 1-keto-D-chiro-inositol (1KDCI), respectively. The polypeptide is Inositol 2-dehydrogenase/D-chiro-inositol 3-dehydrogenase (Lacticaseibacillus casei (Lactobacillus casei)).